The following is a 718-amino-acid chain: Polyribonucleotide nucleotidyltransferase (718 aa).

Positions 493 and 499 each coordinate Mg(2+). A KH domain is found at 560-619 (PRVIKKQIDPDKIRNVIGPGGKMINKIIDETGVKIDIEPDGLIYISSSDAEQAEQAIKAI). The S1 motif domain maps to 629–697 (GEVYLGKVVR…ERGRINLSRK (69 aa)). Residues 695–718 (SRKQALGEEDGKTNNDDKKSTKKT) are disordered. Over residues 699-718 (ALGEEDGKTNNDDKKSTKKT) the composition is skewed to basic and acidic residues.

The protein belongs to the polyribonucleotide nucleotidyltransferase family. It depends on Mg(2+) as a cofactor.

The protein resides in the cytoplasm. The catalysed reaction is RNA(n+1) + phosphate = RNA(n) + a ribonucleoside 5'-diphosphate. Its function is as follows. Involved in mRNA degradation. Catalyzes the phosphorolysis of single-stranded polyribonucleotides processively in the 3'- to 5'-direction. The polypeptide is Polyribonucleotide nucleotidyltransferase (Natranaerobius thermophilus (strain ATCC BAA-1301 / DSM 18059 / JW/NM-WN-LF)).